The sequence spans 319 residues: Methionyl-tRNA formyltransferase (319 aa).

Serine 116–proline 119 is a (6S)-5,6,7,8-tetrahydrofolate binding site.

The protein belongs to the Fmt family.

The catalysed reaction is L-methionyl-tRNA(fMet) + (6R)-10-formyltetrahydrofolate = N-formyl-L-methionyl-tRNA(fMet) + (6S)-5,6,7,8-tetrahydrofolate + H(+). In terms of biological role, attaches a formyl group to the free amino group of methionyl-tRNA(fMet). The formyl group appears to play a dual role in the initiator identity of N-formylmethionyl-tRNA by promoting its recognition by IF2 and preventing the misappropriation of this tRNA by the elongation apparatus. This chain is Methionyl-tRNA formyltransferase, found in Wigglesworthia glossinidia brevipalpis.